A 128-amino-acid polypeptide reads, in one-letter code: Glycine cleavage system H protein (128 aa).

The Lipoyl-binding domain occupies valine 24 to lysine 106. Residue lysine 65 is modified to N6-lipoyllysine.

This sequence belongs to the GcvH family. As to quaternary structure, the glycine cleavage system is composed of four proteins: P, T, L and H. (R)-lipoate serves as cofactor.

Its function is as follows. The glycine cleavage system catalyzes the degradation of glycine. The H protein shuttles the methylamine group of glycine from the P protein to the T protein. In Yersinia pseudotuberculosis serotype O:1b (strain IP 31758), this protein is Glycine cleavage system H protein.